The sequence spans 289 residues: 4-hydroxy-tetrahydrodipicolinate synthase (289 aa).

Residue Thr-44 participates in pyruvate binding. Tyr-132 serves as the catalytic Proton donor/acceptor. Lys-161 serves as the catalytic Schiff-base intermediate with substrate. Ile-201 contacts pyruvate.

The protein belongs to the DapA family. As to quaternary structure, homotetramer; dimer of dimers.

The protein localises to the cytoplasm. The catalysed reaction is L-aspartate 4-semialdehyde + pyruvate = (2S,4S)-4-hydroxy-2,3,4,5-tetrahydrodipicolinate + H2O + H(+). It functions in the pathway amino-acid biosynthesis; L-lysine biosynthesis via DAP pathway; (S)-tetrahydrodipicolinate from L-aspartate: step 3/4. Catalyzes the condensation of (S)-aspartate-beta-semialdehyde [(S)-ASA] and pyruvate to 4-hydroxy-tetrahydrodipicolinate (HTPA). The chain is 4-hydroxy-tetrahydrodipicolinate synthase from Methanocaldococcus jannaschii (strain ATCC 43067 / DSM 2661 / JAL-1 / JCM 10045 / NBRC 100440) (Methanococcus jannaschii).